A 293-amino-acid polypeptide reads, in one-letter code: DNA-directed RNA polymerase III subunit rpc6 (293 aa).

It belongs to the eukaryotic RPC34/RPC39 RNA polymerase subunit family. Component of the RNA polymerase III (Pol III) complex.

The protein localises to the nucleus. Its function is as follows. DNA-dependent RNA polymerase catalyzes the transcription of DNA into RNA using the four ribonucleoside triphosphates as substrates. Specific peripheric component of RNA polymerase III which synthesizes small RNAs, such as 5S rRNA and tRNAs. May direct RNA Pol III binding to the TFIIIB-DNA complex. This is DNA-directed RNA polymerase III subunit rpc6 (polr3f) from Dictyostelium discoideum (Social amoeba).